Consider the following 311-residue polypeptide: Formimidoylglutamase (311 aa).

Residues His-122, Asp-151, His-153, Asp-155, Cys-242, and Asp-244 each contribute to the Mn(2+) site.

Belongs to the arginase family. Homodimer. It depends on Mn(2+) as a cofactor.

It carries out the reaction N-formimidoyl-L-glutamate + H2O = formamide + L-glutamate. The protein operates within amino-acid degradation; L-histidine degradation into L-glutamate; L-glutamate from N-formimidoyl-L-glutamate (hydrolase route): step 1/1. In terms of biological role, catalyzes the conversion of N-formimidoyl-L-glutamate to L-glutamate and formamide. The chain is Formimidoylglutamase from Pseudomonas aeruginosa (strain ATCC 15692 / DSM 22644 / CIP 104116 / JCM 14847 / LMG 12228 / 1C / PRS 101 / PAO1).